Reading from the N-terminus, the 447-residue chain is Phosphoglucosamine mutase (447 aa).

Ser104 (phosphoserine intermediate) is an active-site residue. 4 residues coordinate Mg(2+): Ser104, Asp243, Asp245, and Asp247. At Ser104 the chain carries Phosphoserine.

It belongs to the phosphohexose mutase family. Mg(2+) is required as a cofactor. In terms of processing, activated by phosphorylation.

It catalyses the reaction alpha-D-glucosamine 1-phosphate = D-glucosamine 6-phosphate. Its function is as follows. Catalyzes the conversion of glucosamine-6-phosphate to glucosamine-1-phosphate. The protein is Phosphoglucosamine mutase of Corynebacterium efficiens (strain DSM 44549 / YS-314 / AJ 12310 / JCM 11189 / NBRC 100395).